Here is a 377-residue protein sequence, read N- to C-terminus: Chaperone protein DnaJ (377 aa).

The 66-residue stretch at Asp5–Gly70 folds into the J domain. A CR-type zinc finger spans residues Gly138–Thr216. Residues Cys151, Cys154, Cys168, Cys171, Cys190, Cys193, Cys204, and Cys207 each contribute to the Zn(2+) site. 4 CXXCXGXG motif repeats span residues Cys151–Gly158, Cys168–Gly175, Cys190–Gly197, and Cys204–Gly211.

This sequence belongs to the DnaJ family. In terms of assembly, homodimer. Zn(2+) serves as cofactor.

The protein localises to the cytoplasm. Participates actively in the response to hyperosmotic and heat shock by preventing the aggregation of stress-denatured proteins and by disaggregating proteins, also in an autonomous, DnaK-independent fashion. Unfolded proteins bind initially to DnaJ; upon interaction with the DnaJ-bound protein, DnaK hydrolyzes its bound ATP, resulting in the formation of a stable complex. GrpE releases ADP from DnaK; ATP binding to DnaK triggers the release of the substrate protein, thus completing the reaction cycle. Several rounds of ATP-dependent interactions between DnaJ, DnaK and GrpE are required for fully efficient folding. Also involved, together with DnaK and GrpE, in the DNA replication of plasmids through activation of initiation proteins. In Orientia tsutsugamushi (strain Boryong) (Rickettsia tsutsugamushi), this protein is Chaperone protein DnaJ.